The chain runs to 393 residues: tRNA(Met) cytidine acetate ligase (393 aa).

The ATP site is built by glycine 81, asparagine 142, and arginine 167.

Belongs to the TmcAL family.

The protein resides in the cytoplasm. It carries out the reaction cytidine(34) in elongator tRNA(Met) + acetate + ATP = N(4)-acetylcytidine(34) in elongator tRNA(Met) + AMP + diphosphate. Its function is as follows. Catalyzes the formation of N(4)-acetylcytidine (ac(4)C) at the wobble position of elongator tRNA(Met), using acetate and ATP as substrates. First activates an acetate ion to form acetyladenylate (Ac-AMP) and then transfers the acetyl group to tRNA to form ac(4)C34. The protein is tRNA(Met) cytidine acetate ligase of Bacillus mycoides (strain KBAB4) (Bacillus weihenstephanensis).